The following is a 462-amino-acid chain: A-type ATP synthase subunit B (462 aa).

The protein belongs to the ATPase alpha/beta chains family. In terms of assembly, has multiple subunits with at least A(3), B(3), C, D, E, F, H, I and proteolipid K(x).

It localises to the cell membrane. Functionally, component of the A-type ATP synthase that produces ATP from ADP in the presence of a proton gradient across the membrane. The B chain is a regulatory subunit. The sequence is that of A-type ATP synthase subunit B from Pyrococcus abyssi (strain GE5 / Orsay).